The following is a 369-amino-acid chain: tRNA(Met) cytidine acetate ligase (369 aa).

Residues 7 to 20, Gly-96, Asn-152, and Arg-175 contribute to the ATP site; that span reads VAEF…HKYL.

Belongs to the TmcAL family.

It localises to the cytoplasm. The catalysed reaction is cytidine(34) in elongator tRNA(Met) + acetate + ATP = N(4)-acetylcytidine(34) in elongator tRNA(Met) + AMP + diphosphate. Catalyzes the formation of N(4)-acetylcytidine (ac(4)C) at the wobble position of elongator tRNA(Met), using acetate and ATP as substrates. First activates an acetate ion to form acetyladenylate (Ac-AMP) and then transfers the acetyl group to tRNA to form ac(4)C34. The chain is tRNA(Met) cytidine acetate ligase from Streptococcus agalactiae serotype III (strain NEM316).